Consider the following 1032-residue polypeptide: Importin beta-like protein KAP120 (1032 aa).

At Ala2 the chain carries N-acetylalanine. The Importin N-terminal domain maps to 31-103 (AEQQLRQWET…RGRLFEMIDE (73 aa)).

This sequence belongs to the importin beta family. Interacts with GTP-bound GSP1 and RFP1. Associates with the nuclear pore complex.

The protein localises to the cytoplasm. Its subcellular location is the nucleus. In terms of biological role, functions in nuclear protein import as nuclear transport receptor. Serves as receptor for nuclear localization signals (NLS) in cargo substrates. Thought to mediate docking of the importin/substrate complex to the nuclear pore complex (NPC) through binding to nucleoporin and the complex is subsequently translocated through the pore by an energy requiring, RAN-dependent mechanism. Required for nuclear import of Ho endonuclease and RFP1, and involved in rRNA-processing and assembly or export of 60S ribosomal subunits. This is Importin beta-like protein KAP120 (KAP120) from Saccharomyces cerevisiae (strain ATCC 204508 / S288c) (Baker's yeast).